The primary structure comprises 635 residues: DNA mismatch repair protein MutL (635 aa).

Residues 359–399 are disordered; sequence GTNKYAQPEAAKSSAAEQAVARERSSARERAAPAYKEDHPY. A compositionally biased stretch (low complexity) spans 364–377; sequence AQPEAAKSSAAEQA. Residues 378-399 are compositionally biased toward basic and acidic residues; it reads VARERSSARERAAPAYKEDHPY.

This sequence belongs to the DNA mismatch repair MutL/HexB family.

Its function is as follows. This protein is involved in the repair of mismatches in DNA. It is required for dam-dependent methyl-directed DNA mismatch repair. May act as a 'molecular matchmaker', a protein that promotes the formation of a stable complex between two or more DNA-binding proteins in an ATP-dependent manner without itself being part of a final effector complex. The protein is DNA mismatch repair protein MutL of Yersinia pseudotuberculosis serotype O:1b (strain IP 31758).